The sequence spans 100 residues: Urease subunit gamma (100 aa).

It belongs to the urease gamma subunit family. Heterotrimer of UreA (gamma), UreB (beta) and UreC (alpha) subunits. Three heterotrimers associate to form the active enzyme.

The protein resides in the cytoplasm. The catalysed reaction is urea + 2 H2O + H(+) = hydrogencarbonate + 2 NH4(+). The protein operates within nitrogen metabolism; urea degradation; CO(2) and NH(3) from urea (urease route): step 1/1. The polypeptide is Urease subunit gamma (Flavobacterium johnsoniae (strain ATCC 17061 / DSM 2064 / JCM 8514 / BCRC 14874 / CCUG 350202 / NBRC 14942 / NCIMB 11054 / UW101) (Cytophaga johnsonae)).